Reading from the N-terminus, the 239-residue chain is Ribonuclease HII (239 aa).

The RNase H type-2 domain occupies 18-231 (KIIVGLDEAG…SKNLLKEIEE (214 aa)). 3 residues coordinate a divalent metal cation: Asp-24, Glu-25, and Asp-125.

It belongs to the RNase HII family. Mn(2+) is required as a cofactor. Requires Mg(2+) as cofactor.

Its subcellular location is the cytoplasm. It carries out the reaction Endonucleolytic cleavage to 5'-phosphomonoester.. Functionally, endonuclease that specifically degrades the RNA of RNA-DNA hybrids. In Methanococcus maripaludis (strain C5 / ATCC BAA-1333), this protein is Ribonuclease HII.